The primary structure comprises 270 residues: SURF1-like protein (270 aa).

A run of 2 helical transmembrane segments spans residues 7–29 (GFKL…VYRY) and 246–265 (YIGT…FRYM).

Belongs to the SURF1 family.

Its subcellular location is the mitochondrion inner membrane. In terms of biological role, probably involved in the biogenesis of the COX complex. This chain is SURF1-like protein (surf1-1), found in Dictyostelium discoideum (Social amoeba).